A 1102-amino-acid polypeptide reads, in one-letter code: Ubiquitin carboxyl-terminal hydrolase 7 (1102 aa).

Low complexity predominate over residues 1–10 (MNHQQQQQQQ). The interval 1-38 (MNHQQQQQQQKAGEQQLSEPEDMEMEAGDTDDPPRITQ) is disordered. The segment at 1-208 (MNHQQQQQQQ…APHGVAWDSK (208 aa)) is interaction with TSPYL5. Phosphoserine is present on Ser-18. A compositionally biased stretch (acidic residues) spans 19 to 31 (EPEDMEMEAGDTD). Position 49 is a phosphoserine (Ser-49). Residues 53–208 (NTAEEDMEDD…APHGVAWDSK (156 aa)) are interaction with p53/TP53, MDM2 and EBNA1. Residues 68–195 (EATFQFTVER…DDKVTFEVFV (128 aa)) form the MATH domain. A necessary for nuclear localization region spans residues 70–205 (TFQFTVERFS…QADAPHGVAW (136 aa)). A USP domain is found at 214 to 521 (VGLKNQGATC…NAYMLVYIRE (308 aa)). Cys-223 (nucleophile) is an active-site residue. The active-site Proton acceptor is His-464. Residues 622-801 (LWPMQARSNG…HRVDVIFCDK (180 aa)) are interaction with ICP0/VMW110. Lys-869 carries the post-translational modification N6-acetyllysine; alternate. Lys-869 participates in a covalent cross-link: Glycyl lysine isopeptide (Lys-Gly) (interchain with G-Cter in SUMO2); alternate. Lys-869 participates in a covalent cross-link: Glycyl lysine isopeptide (Lys-Gly) (interchain with G-Cter in ubiquitin); alternate. A Glycyl lysine isopeptide (Lys-Gly) (interchain with G-Cter in SUMO2) cross-link involves residue Lys-882. Ser-963 bears the Phosphoserine mark. 2 positions are modified to N6-acetyllysine: Lys-1084 and Lys-1096.

This sequence belongs to the peptidase C19 family. Monomer. Homodimer. Part of a complex with DAXX, MDM2, RASSF1 and USP7. Part of a complex with DAXX, MDM2 and USP7. Interacts with MDM2; the interaction is independent of p53/TP53. Interacts with DAXX; the interaction is direct and independent of MDM2 and p53/TP53. Component of a complex composed of KMT2E/MLL5 (isoform 3), OGT (isoform 1) and USP7; the complex stabilizes KMT2E/MLL5, preventing KMT2E/MLL5 ubiquitination and proteasomal-mediated degradation. Interacts (via MATH domain) with KMT2E/MLL5 isoform 3. Interacts with OGT isoform 1. Interacts with FOXO4; the interaction is enhanced in presence of hydrogen peroxide and occurs independently of p53/TP53. Interacts with p53/TP53; the interaction is enhanced in response to DNA damage. Interacts with TSPYL5; this impairs interaction with p53/TP53. Interacts with PTEN; the interaction is direct. Interacts with ATXN1 and the strength of interaction is influenced by the length of the poly-Gln region in ATXN1. A weaker interaction seen with mutants having longer poly-Gln regions. Interacts with KIAA1530/UVSSA. Interacts with ABRAXAS2; the interaction is direct. Identified in a complex with TP53/p53 and ABRAXAS2. Interacts with MEX3C and antagonizes its ability to degrade mRNA. Interacts with DNMT1 and UHRF1. Interacts with FOXP3. Interacts (via MATH domain) with RNF220. Associated component of the Polycomb group (PcG) multiprotein PRC1-like complex. Interacts with EPOP. Interacts with OTUD4 and USP9X; the interaction is direct. Interacts with CRY2. Interacts with REST. Interacts with ERCC6. Part of a complex consisting of USP7, MAGEL2 and TRIM27; directly interacts with MAGEL2; directly interacts with TRIM27. As to quaternary structure, (Microbial infection) Isoform 1 and isoform 2 interact with herpesvirus 1 trans-acting transcriptional protein ICP0/VMW110. Binding to ICP0/VMW110 may modulate the substrate specificity or activity of USP7 to stabilize viral proteins. In terms of assembly, (Microbial infection) Interacts with Epstein-Barr virus EBNA1; the interaction is independent and simultaneous to EBNA1 interaction with USP7 as well as necessary for PML nuclear bodies disruption by EBNA1. EBNA1, USP7 and CSNK2B form a ternary complex. EBNA1 shows a 10-fold higher affinity than p53/TP53 and can compete with it for USP7 binding. (Microbial infection) Interacts with human cytomegalovirus proteins UL35 and UL35A; these interactions inhibit the ability of USP7 to form nuclear bodies. As to quaternary structure, (Microbial infection) Interacts with herpes virus 8/HHV-8 proteins vIRF-1 and vIRF-3; these interactions may disrupt TP53 signaling pathway during viral infection by decreasing the availability of USP7 for deubiquitinating and stabilizing TP53. In terms of assembly, (Microbial infection) Interacts with herpes virus 8/HHV-8 protein vIRF-2; this interaction modulates antiviral signaling via disruption of USP7 interactions with innate immune signaling proteins TRAF3 and TRAF6 thus affecting their ubiquitination. Post-translationally, isoform 1: Phosphorylated. Isoform 1 is phosphorylated at positions Ser-18 and Ser-963. Isoform 2: Not phosphorylated. Isoform 1: Polyneddylated. Isoform 2: Not Polyneddylated. In terms of processing, isoform 1 and isoform 2: Not sumoylated. Post-translationally, isoform 1 and isoform 2: Polyubiquitinated by herpesvirus 1 trans-acting transcriptional protein ICP0/VMW110; leading to its subsequent proteasomal degradation. Isoform 1: Ubiquitinated at Lys-869. As to expression, expressed in neural progenitor cells (at protein level). Widely expressed. Overexpressed in prostate cancer.

The protein localises to the nucleus. It localises to the cytoplasm. It is found in the PML body. Its subcellular location is the chromosome. The enzyme catalyses Thiol-dependent hydrolysis of ester, thioester, amide, peptide and isopeptide bonds formed by the C-terminal Gly of ubiquitin (a 76-residue protein attached to proteins as an intracellular targeting signal).. With respect to regulation, inhibited by N-ethyl-maleimide (NEM) and divalent cations. Tolerates high concentrations of NaCl but is inhibited at concentrations of 195 mM and higher. Hydrolase that deubiquitinates target proteins such as ARMC5, FOXO4, DEPTOR, KAT5, p53/TP53, MDM2, ERCC6, DNMT1, UHRF1, PTEN, KMT2E/MLL5 and DAXX. Together with DAXX, prevents MDM2 self-ubiquitination and enhances the E3 ligase activity of MDM2 towards p53/TP53, thereby promoting p53/TP53 ubiquitination and proteasomal degradation. Deubiquitinates p53/TP53, preventing degradation of p53/TP53, and enhances p53/TP53-dependent transcription regulation, cell growth repression and apoptosis. Deubiquitinates p53/TP53 and MDM2 and strongly stabilizes p53/TP53 even in the presence of excess MDM2, and also induces p53/TP53-dependent cell growth repression and apoptosis. Deubiquitination of FOXO4 in presence of hydrogen peroxide is not dependent on p53/TP53 and inhibits FOXO4-induced transcriptional activity. In association with DAXX, is involved in the deubiquitination and translocation of PTEN from the nucleus to the cytoplasm, both processes that are counteracted by PML. Deubiquitinates KMT2E/MLL5 preventing KMT2E/MLL5 proteasomal-mediated degradation. Involved in cell proliferation during early embryonic development. Involved in transcription-coupled nucleotide excision repair (TC-NER) in response to UV damage: recruited to DNA damage sites following interaction with KIAA1530/UVSSA and promotes deubiquitination of ERCC6, preventing UV-induced degradation of ERCC6. Involved in maintenance of DNA methylation via its interaction with UHRF1 and DNMT1: acts by mediating deubiquitination of UHRF1 and DNMT1, preventing their degradation and promoting DNA methylation by DNMT1. Deubiquitinates alkylation repair enzyme ALKBH3. OTUD4 recruits USP7 and USP9X to stabilize ALKBH3, thereby promoting the repair of alkylated DNA lesions. Acts as a chromatin regulator via its association with the Polycomb group (PcG) multiprotein PRC1-like complex; may act by deubiquitinating components of the PRC1-like complex. Able to mediate deubiquitination of histone H2B; it is however unsure whether this activity takes place in vivo. Exhibits a preference towards 'Lys-48'-linked ubiquitin chains. Increases regulatory T-cells (Treg) suppressive capacity by deubiquitinating and stabilizing the transcription factor FOXP3 which is crucial for Treg cell function. Plays a role in the maintenance of the circadian clock periodicity via deubiquitination and stabilization of the CRY1 and CRY2 proteins. Deubiquitinates REST, thereby stabilizing REST and promoting the maintenance of neural progenitor cells. Deubiquitinates SIRT7, inhibiting SIRT7 histone deacetylase activity and regulating gluconeogenesis. Involved in the regulation of WASH-dependent actin polymerization at the surface of endosomes and the regulation of endosomal protein recycling. It maintains optimal WASH complex activity and precise F-actin levels via deubiquitination of TRIM27 and WASHC1. Mediates the deubiquitination of phosphorylated DEPTOR, promoting its stability and leading to decreased mTORC1 signaling. In terms of biological role, (Microbial infection) Contributes to the overall stabilization and trans-activation capability of the herpesvirus 1 trans-acting transcriptional protein ICP0/VMW110 during HSV-1 infection. Its function is as follows. (Microbial infection) Upon infection with Epstein-Barr virus, the interaction with viral EBNA1 increases the association of USP7 with PML proteins, which is required for the polyubiquitylation and degradation of PML. In Homo sapiens (Human), this protein is Ubiquitin carboxyl-terminal hydrolase 7.